The sequence spans 245 residues: Exosome complex component RRP41 (245 aa).

The residue at position 2 (alanine 2) is an N-acetylalanine.

This sequence belongs to the RNase PH family. In terms of assembly, component of the RNA exosome core complex (Exo-9), composed of EXOSC1, EXOSC2, EXOSC3, EXOSC4, EXOSC5, EXOSC6, EXOSC7, EXOSC8 and EXOSC9; within the complex interacts with EXOSC2, EXOSC7 and EXOSC9. The catalytically inactive RNA exosome core complex (Exo-9) associates with the catalytic subunit EXOSC10/RRP6. Exo-9 may associate with DIS3 to form the nucleolar exosome complex, or DIS3L to form the cytoplasmic exosome complex. Exo-9 is formed by a hexameric base ring consisting of the heterodimers EXOSC4-EXOSC9, EXOSC5-EXOSC8 and EXOSC6-EXOSC7, and a cap ring consisting of EXOSC1, EXOSC2 and EXOSC3. The RNA exosome complex associates with cofactors C1D/RRP47, MPHOSPH6/MPP6 and MTREX/MTR4. Interacts with DDX60. Interacts with DIS3; the interaction is direct.

It is found in the cytoplasm. The protein localises to the nucleus. The protein resides in the nucleolus. It localises to the nucleoplasm. Non-catalytic component of the RNA exosome complex which has 3'-&gt;5' exoribonuclease activity and participates in a multitude of cellular RNA processing and degradation events. In the nucleus, the RNA exosome complex is involved in proper maturation of stable RNA species such as rRNA, snRNA and snoRNA, in the elimination of RNA processing by-products and non-coding 'pervasive' transcripts, such as antisense RNA species and promoter-upstream transcripts (PROMPTs), and of mRNAs with processing defects, thereby limiting or excluding their export to the cytoplasm. The RNA exosome may be involved in Ig class switch recombination (CSR) and/or Ig variable region somatic hypermutation (SHM) by targeting AICDA deamination activity to transcribed dsDNA substrates. In the cytoplasm, the RNA exosome complex is involved in general mRNA turnover and specifically degrades inherently unstable mRNAs containing AU-rich elements (AREs) within their 3' untranslated regions, and in RNA surveillance pathways, preventing translation of aberrant mRNAs. It seems to be involved in degradation of histone mRNA. The catalytic inactive RNA exosome core complex of 9 subunits (Exo-9) is proposed to play a pivotal role in the binding and presentation of RNA for ribonucleolysis, and to serve as a scaffold for the association with catalytic subunits and accessory proteins or complexes. EXOSC4 binds to ARE-containing RNAs. This is Exosome complex component RRP41 (EXOSC4) from Bos taurus (Bovine).